The sequence spans 208 residues: ATP-dependent Clp protease proteolytic subunit (208 aa).

Serine 107 serves as the catalytic Nucleophile. The active site involves histidine 132.

Belongs to the peptidase S14 family. As to quaternary structure, fourteen ClpP subunits assemble into 2 heptameric rings which stack back to back to give a disk-like structure with a central cavity, resembling the structure of eukaryotic proteasomes.

The protein localises to the cytoplasm. The catalysed reaction is Hydrolysis of proteins to small peptides in the presence of ATP and magnesium. alpha-casein is the usual test substrate. In the absence of ATP, only oligopeptides shorter than five residues are hydrolyzed (such as succinyl-Leu-Tyr-|-NHMec, and Leu-Tyr-Leu-|-Tyr-Trp, in which cleavage of the -Tyr-|-Leu- and -Tyr-|-Trp bonds also occurs).. Functionally, cleaves peptides in various proteins in a process that requires ATP hydrolysis. Has a chymotrypsin-like activity. Plays a major role in the degradation of misfolded proteins. In Methylobacterium radiotolerans (strain ATCC 27329 / DSM 1819 / JCM 2831 / NBRC 15690 / NCIMB 10815 / 0-1), this protein is ATP-dependent Clp protease proteolytic subunit.